The chain runs to 325 residues: Lactonase drp35 (325 aa).

Residues glutamate 46, threonine 108, glycine 110, aspartate 128, threonine 131, tyrosine 133, aspartate 136, asparagine 183, aspartate 234, and serine 235 each contribute to the Ca(2+) site. The Proton donor role is filled by aspartate 234.

This sequence belongs to the SMP-30/CGR1 family. Ca(2+) serves as cofactor.

The protein resides in the cytoplasm. Its function is as follows. Exhibits lactonase activity. Acts in cells with perturbed membrane integrity and is possibly related to the membrane homeostasis. This is Lactonase drp35 (drp35) from Staphylococcus epidermidis (strain ATCC 12228 / FDA PCI 1200).